A 238-amino-acid chain; its full sequence is Type III secretion protein hrcQa (238 aa).

Residues 66–238 are hrcQa-C; that stretch reads DAEALLSLLG…SHEEHRHHEY (173 aa).

In terms of assembly, interacts with hrcQb.

Its subcellular location is the cell inner membrane. Functionally, component of the type III secretion system, which is required for effector protein delivery, parasitism, and pathogenicity. Probably participates in the formation of a C-ring-like assembly along with hrcQb. The polypeptide is Type III secretion protein hrcQa (hrcQa) (Pseudomonas savastanoi pv. phaseolicola (Pseudomonas syringae pv. phaseolicola)).